The primary structure comprises 283 residues: Glutamate racemase (283 aa).

Substrate contacts are provided by residues 28 to 29 (DS) and 60 to 61 (YG). The Proton donor/acceptor role is filled by Cys-92. Residue 93-94 (NS) coordinates substrate. The Proton donor/acceptor role is filled by Cys-204. 205 to 206 (TH) provides a ligand contact to substrate.

This sequence belongs to the aspartate/glutamate racemases family.

The catalysed reaction is L-glutamate = D-glutamate. The protein operates within cell wall biogenesis; peptidoglycan biosynthesis. In terms of biological role, provides the (R)-glutamate required for cell wall biosynthesis. This Erwinia tasmaniensis (strain DSM 17950 / CFBP 7177 / CIP 109463 / NCPPB 4357 / Et1/99) protein is Glutamate racemase.